The primary structure comprises 57 residues: UPF0509 protein YciZ (57 aa).

This sequence belongs to the UPF0509 family.

This chain is UPF0509 protein YciZ, found in Escherichia coli O127:H6 (strain E2348/69 / EPEC).